We begin with the raw amino-acid sequence, 197 residues long: Holliday junction branch migration complex subunit RuvA (197 aa).

The tract at residues 1–62 (MIEFVRGEVA…EDQEVLFGFR (62 aa)) is domain I. Residues 63-141 (SRRERALFTK…ELAPDYIPSE (79 aa)) form a domain II region. A flexible linker region spans residues 141–145 (EGLFA). The segment at 146-197 (QGNAELNEACEALTALGYSEREVEKVKKALQGEVLSTDQYVKRALQLLLNVR) is domain III.

This sequence belongs to the RuvA family. Homotetramer. Forms an RuvA(8)-RuvB(12)-Holliday junction (HJ) complex. HJ DNA is sandwiched between 2 RuvA tetramers; dsDNA enters through RuvA and exits via RuvB. An RuvB hexamer assembles on each DNA strand where it exits the tetramer. Each RuvB hexamer is contacted by two RuvA subunits (via domain III) on 2 adjacent RuvB subunits; this complex drives branch migration. In the full resolvosome a probable DNA-RuvA(4)-RuvB(12)-RuvC(2) complex forms which resolves the HJ.

It is found in the cytoplasm. The RuvA-RuvB-RuvC complex processes Holliday junction (HJ) DNA during genetic recombination and DNA repair, while the RuvA-RuvB complex plays an important role in the rescue of blocked DNA replication forks via replication fork reversal (RFR). RuvA specifically binds to HJ cruciform DNA, conferring on it an open structure. The RuvB hexamer acts as an ATP-dependent pump, pulling dsDNA into and through the RuvAB complex. HJ branch migration allows RuvC to scan DNA until it finds its consensus sequence, where it cleaves and resolves the cruciform DNA. The chain is Holliday junction branch migration complex subunit RuvA from Exiguobacterium sibiricum (strain DSM 17290 / CCUG 55495 / CIP 109462 / JCM 13490 / 255-15).